A 213-amino-acid chain; its full sequence is Putative manganese efflux pump MntP (213 aa).

The next 7 membrane-spanning stretches (helical) occupy residues 6-26 (LGVLAVGLGADAFSMALGIGM), 34-54 (AFMLGLVVALFHIFMPWFGIL), 58-78 (ALGLVVGRLASFIGAAVLFFL), 107-127 (GSGGGAIVGAGAIVGGRLFAP), 132-152 (LVVIGAAVSMDALSVGFSLGT), 153-173 (VGAQLLPTVLTFGVVAGIMTV), and 192-212 (LAGGLILLGIGIKLLLGSASP).

This sequence belongs to the MntP (TC 9.B.29) family.

Its subcellular location is the cell membrane. Functionally, probably functions as a manganese efflux pump. This is Putative manganese efflux pump MntP from Heliobacterium modesticaldum (strain ATCC 51547 / Ice1).